Consider the following 520-residue polypeptide: Transcription factor MYB33 (520 aa).

The tract at residues 1-24 (MSYTSTDSDHNESPAADDNGSDCR) is disordered. HTH myb-type domains follow at residues 29–81 (GHAL…ANHL) and 82–136 (RPNL…KRRQ). 2 DNA-binding regions (H-T-H motif) span residues 57–81 (WNAVQKHTSLFRCGKSCRLRWANHL) and 109–132 (WARMAAHLPGRTDNEIKNYWNTRI). A compositionally biased stretch (low complexity) spans 331–342 (SSSPPHSDLLDP). Disordered stretches follow at residues 331–359 (SSSPPHSDLLDPFDTYIQSPPPPTGGEES) and 426–447 (EMSTQNADETPPRQREKKRKPL).

In terms of tissue distribution, mostly expressed in stems, shoot apices, flowers and floral shoot tips, and, to a lower extent, in roots (e.g. root tips), seedlings, leaves and siliques.

It is found in the nucleus. Its function is as follows. Transcriptional activator of alpha-amylase expression that binds to 5'-CAACTGTC-3' motif in target gene promoter. Positive regulator of abscisic acid (ABA) responses leading to growth arrest during seed germination. In vegetative tissues, inhibits growth by reducing cell proliferation. Promotes the expression of aleurone-related genes (e.g. CP1, CP, GASA1, BXL1 and BXL2) in seeds. Together with MYB65 and MYB101, promotes the programmed cell death (PCD) the vacuolation of protein storage vacuoles (PSVs) in the aleurone layers during seed germination. Binds to a GARE site (GA-response element) in the LEAFY promoter, essential for its gibberellic acid (GA)-mediated induction. Together with MYB65, facilitates anther and tapetum development. The sequence is that of Transcription factor MYB33 from Arabidopsis thaliana (Mouse-ear cress).